Consider the following 285-residue polypeptide: Probable methyltransferase ltbC (285 aa).

Residues 1–22 (MASTGQTNNYKQGYSSQTVETQ) are disordered.

Belongs to the class I-like SAM-binding methyltransferase superfamily. As to quaternary structure, monomer.

Probable methyltransferase; part of the gene cluster that mediates the biosynthesis of luteodienoside A, a glycosylated polyketide consisting of an unusual 1-O-beta-D-glucopyranosyl-myo-inositol (glucinol) ester of 3-hydroxy-2,2,4-trimethylocta-4,6-dienoic acid. The HR-PKS ltbA produces the trimethylated polyketide chain from acetyl-CoA, malonyl-CoA and S-adenosylmethionine (SAM), and the ltbA cAT domain then uses glucinol produced by the glycosyltransferase ltbB as an offloading substrate to release luteodienoside A. Since ltbA and ltbB are sufficient for the biosynthesis of luteodienoside A, the functions of the methyltransferase ltbC and the FAD-binding monooxygenase ltbD within the pathway remain obscur. This is Probable methyltransferase ltbC from Aspergillus luteorubrus.